A 142-amino-acid chain; its full sequence is Hemoglobin subunit alpha-A (142 aa).

In terms of domain architecture, Globin spans 2-142 (VLSANDKSNV…VGTVLTAKYR (141 aa)). His-59 is a binding site for O2. His-88 contributes to the heme b binding site.

Belongs to the globin family. As to quaternary structure, heterotetramer of two alpha chains and two beta chains. In terms of tissue distribution, red blood cells.

In terms of biological role, involved in oxygen transport from the lung to the various peripheral tissues. This chain is Hemoglobin subunit alpha-A (HBAA), found in Columba livia (Rock dove).